The chain runs to 473 residues: High-affinity proline transporter PutP (473 aa).

12 consecutive transmembrane segments (helical) span residues 32 to 52 (LSAGAADMSGWLLMGLPGAMF), 56 to 76 (LSGAWIVIGLCLGAWANWLYV), 114 to 134 (IVILVFFTFYVSSGMVSGGVL), 146 to 166 (GLWIVTGVVVAYTLFGGFLAV), 171 to 191 (FVQGIIMFAALILVPIVTFFH), 218 to 238 (VLGIISLFAWGLGYFGQPHII), 256 to 276 (IGMGWMILSAVGAVLTGLGGI), 299 to 319 (ILFHPIITGFLISAILAAIMS), 350 to 370 (LVFLGRLAVLAVSIVALVLAW), 376 to 396 (ILGLVSYAWAGFGASFGPVVL), 408 to 428 (GALAGMIVGAATVIIWANAGL), and 431 to 451 (FLYEMIPGFAASLLSVFFVSI).

It belongs to the sodium:solute symporter (SSF) (TC 2.A.21) family.

It is found in the cell membrane. It carries out the reaction L-proline(in) + Na(+)(in) = L-proline(out) + Na(+)(out). Catalyzes the high-affinity uptake of extracellular proline. Important for the use of proline as a sole carbon and energy source or a sole nitrogen source. The chain is High-affinity proline transporter PutP from Bacillus subtilis (strain 168).